The sequence spans 219 residues: Orotate phosphoribosyltransferase (219 aa).

5-phospho-alpha-D-ribose 1-diphosphate is bound at residue Lys-26. Orotate is bound at residue 34–35 (FF). Residues 72–73 (YK), Arg-98, Lys-99, Lys-102, His-104, and 124–132 (DDVITAGTA) contribute to the 5-phospho-alpha-D-ribose 1-diphosphate site. Residues Thr-128 and Arg-156 each coordinate orotate.

It belongs to the purine/pyrimidine phosphoribosyltransferase family. PyrE subfamily. In terms of assembly, homodimer. Mg(2+) is required as a cofactor.

It carries out the reaction orotidine 5'-phosphate + diphosphate = orotate + 5-phospho-alpha-D-ribose 1-diphosphate. It participates in pyrimidine metabolism; UMP biosynthesis via de novo pathway; UMP from orotate: step 1/2. Catalyzes the transfer of a ribosyl phosphate group from 5-phosphoribose 1-diphosphate to orotate, leading to the formation of orotidine monophosphate (OMP). The polypeptide is Orotate phosphoribosyltransferase (Xanthomonas campestris pv. campestris (strain 8004)).